Here is a 473-residue protein sequence, read N- to C-terminus: MPGLPKNEHEALEFLKSNNIKWVDLQFTDLLGKLQHITIPSNEFDESSFKVGFGKLDGSSIKGFTSIYESDMVLLPIPQTMTLIPWMQGVARVLTKVFWGGGKGRFERDPRGIAEEAEKYQSEQGYVSYFGPELEFFVFDKVEVDASLPQSGTGYKIHSREAPWSKNGGYVIRYKEGYYPASPVDQLMDIRLEIISTLVDYFGFTIEAAHHEVATAGQGEIDFRFSTLADTADKVQVLKYVTKNIASKRGMIATFMPKPFFGDNGSGMHTHFSLWTKDGKNLMYDPNDEYAELSQIGRYIIGGLLEHGRALSAIVAPTTNSYRRLVPGYEAPVYLVWSKSNRSAAIRIPAYYKGMEKAKRLEYRPPDPSSNPYLVFSAILMAGLDGIRRKLDPGDPVDENIYHMSEEKKRSLKIRELPGSLDEALNELESDNEFLKPVFNSSILQAYLDLKKEEAKMMQLYPHPMEIYQYLDS.

The 85-residue stretch at 18–102 (NNIKWVDLQF…VLTKVFWGGG (85 aa)) folds into the GS beta-grasp domain. Residues 110–473 (PRGIAEEAEK…PMEIYQYLDS (364 aa)) enclose the GS catalytic domain. Mg(2+) contacts are provided by Glu-133 and Glu-135. An ATP-binding site is contributed by Glu-207. 2 residues coordinate Mg(2+): Glu-212 and Glu-220. L-glutamate contacts are provided by residues 264–265 (NG) and Gly-265. His-269 provides a ligand contact to Mg(2+). Residues 271–273 (HFS) and Ser-273 contribute to the ATP site. L-glutamate-binding residues include Arg-324, Glu-330, and Arg-342. Residues Arg-342, Arg-347, and Lys-357 each contribute to the ATP site. Position 362 (Glu-362) interacts with Mg(2+). Arg-364 provides a ligand contact to L-glutamate.

It belongs to the glutamine synthetase family. As to quaternary structure, oligomer of 12 subunits arranged in the form of two hexagons. Mg(2+) serves as cofactor. The cofactor is Mn(2+).

It localises to the cytoplasm. It catalyses the reaction L-glutamate + NH4(+) + ATP = L-glutamine + ADP + phosphate + H(+). Strongly inhibited by glycine and L-alanine. AMP at 10 mM displays a very weak inhibitory effect. The activity of this enzyme is not controlled by adenylation. Its function is as follows. Probably involved in nitrogen metabolism via ammonium assimilation. Catalyzes the ATP-dependent biosynthesis of glutamine from glutamate and ammonia. This chain is Glutamine synthetase, found in Sulfolobus acidocaldarius (strain ATCC 33909 / DSM 639 / JCM 8929 / NBRC 15157 / NCIMB 11770).